A 106-amino-acid chain; its full sequence is MNNIRKGDEVIVLTGRDKKRRGTVLARVDADHVLVEGVNVVKKHVKANPMANNPGGIVEKTLPIHISNVALFNPATGKGDRVGVKEVDGRKVRVFRSNGAVVGAKA.

It belongs to the universal ribosomal protein uL24 family. Part of the 50S ribosomal subunit.

One of two assembly initiator proteins, it binds directly to the 5'-end of the 23S rRNA, where it nucleates assembly of the 50S subunit. Its function is as follows. One of the proteins that surrounds the polypeptide exit tunnel on the outside of the subunit. The protein is Large ribosomal subunit protein uL24 of Bordetella petrii (strain ATCC BAA-461 / DSM 12804 / CCUG 43448).